The sequence spans 865 residues: Carbohydrate-responsive element-binding protein (865 aa).

Disordered stretches follow at residues 15-41 and 53-77; these read PRVV…AGGL and MVSS…LADF. 3 positions are modified to phosphoserine: S20, S23, and S25. At T27 the chain carries Phosphothreonine. Residue S196 is modified to Phosphoserine. Disordered stretches follow at residues 334–392 and 500–653; these read GILG…TKMP and QPRC…LSRG. Residues 351–368 show a composition bias toward polar residues; the sequence is GMTPLSGNTRLQARNSCS. Positions 515–533 are enriched in low complexity; it reads ASPPTLTSATASPTATATA. S568 carries the post-translational modification Phosphoserine; by AMPK. The segment covering 583–597 has biased composition (pro residues); the sequence is PPIPAPTPPRPPPGP. 3 positions are modified to phosphoserine: S615, S627, and S644. A bHLH domain is found at 662–716; sequence NRRITHISAEQKRRFNIKLGFDTLHGLVSTLSAQPSLKVSKATTLQKTAEYILML. The leucine-zipper stretch occupies residues 716–737; that stretch reads LQQERAAMQEEAQQLRDEIEEL.

In terms of assembly, binds DNA as a heterodimer with TCFL4/MLX. In terms of processing, phosphorylation at Ser-568 by AMPK inactivates the DNA-binding activity.

It localises to the nucleus. In terms of biological role, transcriptional repressor. Binds to the canonical and non-canonical E box sequences 5'-CACGTG-3'. This is Carbohydrate-responsive element-binding protein (Mlxipl) from Rattus norvegicus (Rat).